The chain runs to 62 residues: MKLIILLFVVAAFVTLAMGKKSLKDPLTITTAHFDHPEGLKHKIRRPYNKHEDRLIQCKIYL.

The signal sequence occupies residues M1–G19.

This is an uncharacterized protein from Lepidoptera (butterflies and moths).